Here is a 187-residue protein sequence, read N- to C-terminus: Large ribosomal subunit protein eL18y (187 aa).

The tract at residues 151–187 is disordered; it reads FGPAPGVPHSHSKPYVRAKGRKFEKARGKRKSRGFKV. 2 stretches are compositionally biased toward basic residues: residues 160–170 and 177–187; these read SHSKPYVRAKG and RGKRKSRGFKV.

The protein belongs to the eukaryotic ribosomal protein eL18 family. In terms of assembly, interacts with NIK1. Interacts directly with EXA1. As to expression, ubiquitous.

The protein resides in the cytoplasm. The chain is Large ribosomal subunit protein eL18y (RPL18B) from Arabidopsis thaliana (Mouse-ear cress).